Consider the following 571-residue polypeptide: Proline--tRNA ligase (571 aa).

This sequence belongs to the class-II aminoacyl-tRNA synthetase family. ProS type 1 subfamily. In terms of assembly, homodimer.

The protein localises to the cytoplasm. The enzyme catalyses tRNA(Pro) + L-proline + ATP = L-prolyl-tRNA(Pro) + AMP + diphosphate. In terms of biological role, catalyzes the attachment of proline to tRNA(Pro) in a two-step reaction: proline is first activated by ATP to form Pro-AMP and then transferred to the acceptor end of tRNA(Pro). As ProRS can inadvertently accommodate and process non-cognate amino acids such as alanine and cysteine, to avoid such errors it has two additional distinct editing activities against alanine. One activity is designated as 'pretransfer' editing and involves the tRNA(Pro)-independent hydrolysis of activated Ala-AMP. The other activity is designated 'posttransfer' editing and involves deacylation of mischarged Ala-tRNA(Pro). The misacylated Cys-tRNA(Pro) is not edited by ProRS. This chain is Proline--tRNA ligase, found in Pseudomonas aeruginosa (strain LESB58).